The following is a 376-amino-acid chain: Cyclin-dependent kinase 9-A (376 aa).

The Protein kinase domain maps to tyrosine 19 to phenylalanine 319. ATP-binding positions include isoleucine 25–valine 33 and lysine 48. The Proton acceptor role is filled by aspartate 153. The tract at residues proline 345 to phenylalanine 376 is disordered. Over residues proline 354 to glutamine 369 the composition is skewed to low complexity.

Belongs to the protein kinase superfamily. CMGC Ser/Thr protein kinase family. CDC2/CDKX subfamily. Associates with cyclin-T to form P-TEFb.

It localises to the nucleus. The enzyme catalyses L-seryl-[protein] + ATP = O-phospho-L-seryl-[protein] + ADP + H(+). It catalyses the reaction L-threonyl-[protein] + ATP = O-phospho-L-threonyl-[protein] + ADP + H(+). It carries out the reaction [DNA-directed RNA polymerase] + ATP = phospho-[DNA-directed RNA polymerase] + ADP + H(+). Functionally, member of the cyclin-dependent kinase pair (CDK9/cyclin-T) complex, also called positive transcription elongation factor B (P-TEFb), which is proposed to facilitate the transition from abortive to production elongation by phosphorylating the CTD (C-terminal domain) of the large subunit of RNA polymerase II (RNAP II) and SUPT5H. The protein is Cyclin-dependent kinase 9-A (cdk9-a) of Xenopus laevis (African clawed frog).